Here is a 356-residue protein sequence, read N- to C-terminus: tRNA pseudouridine synthase D (356 aa).

The Nucleophile role is filled by Asp84. The region spanning 159-302 is the TRUD domain; the sequence is GVPNYYGPQR…RRGARRPIRV (144 aa).

It belongs to the pseudouridine synthase TruD family.

The enzyme catalyses uridine(13) in tRNA = pseudouridine(13) in tRNA. In terms of biological role, responsible for synthesis of pseudouridine from uracil-13 in transfer RNAs. The sequence is that of tRNA pseudouridine synthase D from Thermus thermophilus (strain ATCC BAA-163 / DSM 7039 / HB27).